Consider the following 124-residue polypeptide: Schlafen-like protein (124 aa).

The protein belongs to the Schlafen family. Subgroup poxviridae B3 subfamily.

The sequence is that of Schlafen-like protein from Homo sapiens (Human).